Consider the following 98-residue polypeptide: Co-chaperonin GroES (98 aa).

Belongs to the GroES chaperonin family. In terms of assembly, heptamer of 7 subunits arranged in a ring. Interacts with the chaperonin GroEL.

The protein resides in the cytoplasm. In terms of biological role, together with the chaperonin GroEL, plays an essential role in assisting protein folding. The GroEL-GroES system forms a nano-cage that allows encapsulation of the non-native substrate proteins and provides a physical environment optimized to promote and accelerate protein folding. GroES binds to the apical surface of the GroEL ring, thereby capping the opening of the GroEL channel. The polypeptide is Co-chaperonin GroES (Bartonella quintana (strain Toulouse) (Rochalimaea quintana)).